Consider the following 1131-residue polypeptide: Protein TOPLESS (1131 aa).

The LisH domain maps to 4-36 (LSRELVFLILQFLDEEKFKETVHKLEQESGFFF). A CTLH domain is found at 34–92 (FFFNMKYFEDEVHNGNWDEVEKYLSGFTKVDDNRYSMKIFFEIRKQKYLEALDKHDRPK). Serine 214 carries the post-translational modification Phosphoserine. The tract at residues 286–305 (TPPTNASLDYPSADSEHVSK) is disordered. 15 WD repeats span residues 353–393 (SQGS…RLVQ), 415–454 (EPVV…DMRQ), 460–501 (AHVG…KRHT), 504–545 (GHEA…SRVD), 548–591 (APGR…VKRT), 595–634 (FHKR…LLTA), 639–678 (GGLQ…RLLH), 710–756 (DRSA…EPSQ), 766–805 (LRVA…RNAT), 833–871 (NPEE…TMAT), 874–914 (PPPP…VKSK), 917–956 (GHSK…KQRS), 967–1005 (NSAP…CMKQ), 1010–1049 (ESLA…LRCR), and 1060–1102 (LSNS…GKWG). Residues 1100–1131 (KWGVAPPAENGSASGAPTAPSVGASASDQPQR) are disordered.

In terms of assembly, tetramer. Homodimer. Interacts (via the LisH domain) with WUS (via the C-terminal domain). Interacts with NINJA/AFPH2. Interacts with IAA1; IAA2; IAA3; IAA4; IAA6; IAA8; IAA9; IAA11; IAA13; IAA14; IAA17; IAA18; IAA26; IAA27 and IAA28. Interacts (via the LisH domain) with IAA12/BDL (via domain I). Can form a complex with IAA12 and ARF5. Interacts with AP2 (via EAR motif) and HDA19. Interacts with TIFY5A/JAZ8 (via EAR motif). Interacts with SPEAR3/TIE1. Interacts with SPL (via EAR motif). Interacts with ZAT2 and ZAT3 (via the EAR motif). Interacts with JAZ13 (via EAR motif). Interacts with GIR1 and GIR2. As to expression, expressed in embryo and in extraembryonic tissues. Expressed in inflorescences, flowers, floral meristems, developing anthers and ovules. Detected in the vascular tissues, shoot apical meristem, cotyledons and young leaves. Expressed ubiquitously in the pistils, stamens and pollens.

The protein resides in the nucleus. Functionally, transcriptional corepressor. May repress the expression of root-promoting genes in the top half of the embryo to allow proper differentiation of the shoot pole during the transition stage of embryogenesis. Regulates the expression of PLT1 and PLT2. Negative regulator of jasmonate responses. Negative regulator of auxin responses. Negative regulator of multiple floral organ identity genes. Required for ovule development. This Arabidopsis thaliana (Mouse-ear cress) protein is Protein TOPLESS (TPL).